The sequence spans 497 residues: Angiopoietin-1 (497 aa).

Positions 1 to 19 (MTVFLSFAFLAAILTHIGC) are cleaved as a signal peptide. Residues Asn92, Asn122, Asn154, Asn243, and Asn294 are each glycosylated (N-linked (GlcNAc...) asparagine). A coiled-coil region spans residues 158-256 (RLEIQLLENS…LQKQQLELMD (99 aa)). The Fibrinogen C-terminal domain occupies 276–496 (KEEEKPFRDC…STTMMIRPLD (221 aa)). Cystine bridges form between Cys285/Cys314 and Cys438/Cys451.

In terms of assembly, homooligomer. Interacts with TEK/TIE2. Interacts with SVEP1/polydom. Interacts with THBD; this interaction significantly inhibits the generation of activated PC and TAFIa/CPB2 by the thrombin/thrombomodulin complex.

Its subcellular location is the secreted. Functionally, binds and activates TIE2 receptor by inducing its tyrosine phosphorylation. Implicated in endothelial developmental processes later and distinct from that of VEGF. Appears to play a crucial role in mediating reciprocal interactions between the endothelium and surrounding matrix and mesenchyme. Mediates blood vessel maturation/stability. It may play an important role in the heart early development. This Canis lupus familiaris (Dog) protein is Angiopoietin-1 (ANGPT1).